The sequence spans 197 residues: dITP/XTP pyrophosphatase (197 aa).

Residue Thr8–Lys13 coordinates substrate. Residues Glu40 and Asp69 each contribute to the Mg(2+) site. Asp69 (proton acceptor) is an active-site residue. Substrate is bound by residues Ser70, Phe154 to Asp157, Lys177, and His182 to Arg183.

Belongs to the HAM1 NTPase family. Homodimer. Mg(2+) is required as a cofactor.

The catalysed reaction is XTP + H2O = XMP + diphosphate + H(+). The enzyme catalyses dITP + H2O = dIMP + diphosphate + H(+). It carries out the reaction ITP + H2O = IMP + diphosphate + H(+). Functionally, pyrophosphatase that catalyzes the hydrolysis of nucleoside triphosphates to their monophosphate derivatives, with a high preference for the non-canonical purine nucleotides XTP (xanthosine triphosphate), dITP (deoxyinosine triphosphate) and ITP. Seems to function as a house-cleaning enzyme that removes non-canonical purine nucleotides from the nucleotide pool, thus preventing their incorporation into DNA/RNA and avoiding chromosomal lesions. This Yersinia pseudotuberculosis serotype I (strain IP32953) protein is dITP/XTP pyrophosphatase.